The sequence spans 328 residues: Beta-ketoacyl-[acyl-carrier-protein] synthase III (328 aa).

Active-site residues include Cys113 and His253. Residues 254 to 258 (QANLR) form an ACP-binding region. Asn283 is a catalytic residue.

Belongs to the thiolase-like superfamily. FabH family. In terms of assembly, homodimer.

The protein resides in the cytoplasm. The enzyme catalyses malonyl-[ACP] + acetyl-CoA + H(+) = 3-oxobutanoyl-[ACP] + CO2 + CoA. The protein operates within lipid metabolism; fatty acid biosynthesis. Catalyzes the condensation reaction of fatty acid synthesis by the addition to an acyl acceptor of two carbons from malonyl-ACP. Catalyzes the first condensation reaction which initiates fatty acid synthesis and may therefore play a role in governing the total rate of fatty acid production. Possesses both acetoacetyl-ACP synthase and acetyl transacylase activities. Its substrate specificity determines the biosynthesis of branched-chain and/or straight-chain of fatty acids. In Fusobacterium nucleatum subsp. nucleatum (strain ATCC 25586 / DSM 15643 / BCRC 10681 / CIP 101130 / JCM 8532 / KCTC 2640 / LMG 13131 / VPI 4355), this protein is Beta-ketoacyl-[acyl-carrier-protein] synthase III.